A 574-amino-acid chain; its full sequence is MEELVSCHHLPLLCLQSSVPPNGCLTFFQDSACQRCSHSEFSNGHPLNDVSLQNDVAVNPIVAKSIDPSADLQLLPLLESVKEEPTLSIIVVGASGDLAKKKIFPALFALFYENCLPENFTVFGFSRTEMNDEELRTMISKTLTCRIDQRENCGEKMDHFLQRCFYHSGQYNSEDDFSGLDCKLKEKEAGRLQNRLFYLSIPPNIFVDVVRCVSHRASSASGWTRVIVEKPFGRDSDSSRELTRSFKQYLSEDQIFRIDHYLGKELVENLSVLRFSNLVFEPLWSRNYIRNVQLIFSEDFGTEGRGGYFDNYGIIRDIMQNHLLQILALFAMETPVSLDAEDIRNEKVKVLRSMKPLKLQDVVVGQYKGHSKGNKSYSGYTDDPTVPNNSVTPTFAAAALFIDNARWDGVPFLMKAGKALHTKRAEIRVQFRHVPGNLYKKTFGTDLDKATNELVLRVQPDEAIYLKINNKVPGLGMRLDRTDLNLCYSTRYRGEIPDAYERLLLDAIEGERRLFIRSDKLDAAWSLFTPLLKELEEKKVAPELYPYGSRGPVGAHYLAAKHNVRWGDLSGEDS.

NADP(+)-binding positions include 93 to 100 and arginine 127; that span reads GASGDLAK. A disulfide bond links cysteine 145 and cysteine 153. Residue lysine 230 participates in NADP(+) binding. Residues lysine 230, 260–264, glutamate 298, and aspartate 317 contribute to the D-glucose 6-phosphate site; that span reads HYLGK. The active-site Proton acceptor is histidine 322. Lysine 415 provides a ligand contact to NADP(+). D-glucose 6-phosphate is bound by residues lysine 418 and lysine 423. Residues arginine 424, arginine 428, and arginine 457 each coordinate NADP(+). A D-glucose 6-phosphate-binding site is contributed by glutamine 459. Residues 465-467 and arginine 550 each bind NADP(+); that span reads YLK.

It belongs to the glucose-6-phosphate dehydrogenase family. Homodimer.

Its subcellular location is the plastid. The protein localises to the chloroplast. The catalysed reaction is D-glucose 6-phosphate + NADP(+) = 6-phospho-D-glucono-1,5-lactone + NADPH + H(+). Its pathway is carbohydrate degradation; pentose phosphate pathway; D-ribulose 5-phosphate from D-glucose 6-phosphate (oxidative stage): step 1/3. With respect to regulation, regulated by metabolites. Post-translationally inactivated by cysteine-mediated redox modification via the ferredoxin-thioredoxin system in the light and this avoids futile cycles with photosynthetic CO2 fixation. In terms of biological role, catalyzes the rate-limiting step of the oxidative pentose-phosphate pathway, which represents a route for the dissimilation of carbohydrates besides glycolysis. The main function of this enzyme is to provide reducing power (NADPH) and pentose phosphates for fatty acid and nucleic acid synthesis which are involved in membrane synthesis and cell division. The polypeptide is Glucose-6-phosphate 1-dehydrogenase, chloroplastic (G6PD) (Spinacia oleracea (Spinach)).